The following is a 155-amino-acid chain: 3-hydroxyacyl-[acyl-carrier-protein] dehydratase FabZ (155 aa).

H61 is a catalytic residue.

This sequence belongs to the thioester dehydratase family. FabZ subfamily.

Its subcellular location is the cytoplasm. The catalysed reaction is a (3R)-hydroxyacyl-[ACP] = a (2E)-enoyl-[ACP] + H2O. Its function is as follows. Involved in unsaturated fatty acids biosynthesis. Catalyzes the dehydration of short chain beta-hydroxyacyl-ACPs and long chain saturated and unsaturated beta-hydroxyacyl-ACPs. This Synechococcus elongatus (strain ATCC 33912 / PCC 7942 / FACHB-805) (Anacystis nidulans R2) protein is 3-hydroxyacyl-[acyl-carrier-protein] dehydratase FabZ.